A 295-amino-acid chain; its full sequence is Ribosomal RNA small subunit methyltransferase A (295 aa).

Residues asparagine 29, leucine 31, glycine 56, glutamate 77, aspartate 102, and asparagine 128 each contribute to the S-adenosyl-L-methionine site.

This sequence belongs to the class I-like SAM-binding methyltransferase superfamily. rRNA adenine N(6)-methyltransferase family. RsmA subfamily.

It localises to the cytoplasm. It catalyses the reaction adenosine(1518)/adenosine(1519) in 16S rRNA + 4 S-adenosyl-L-methionine = N(6)-dimethyladenosine(1518)/N(6)-dimethyladenosine(1519) in 16S rRNA + 4 S-adenosyl-L-homocysteine + 4 H(+). Its function is as follows. Specifically dimethylates two adjacent adenosines (A1518 and A1519) in the loop of a conserved hairpin near the 3'-end of 16S rRNA in the 30S particle. May play a critical role in biogenesis of 30S subunits. This chain is Ribosomal RNA small subunit methyltransferase A, found in Listeria monocytogenes serovar 1/2a (strain ATCC BAA-679 / EGD-e).